The chain runs to 352 residues: 4-hydroxy-2-oxovalerate aldolase 5 (352 aa).

In terms of domain architecture, Pyruvate carboxyltransferase spans 9–261; sequence IRVTDSSLRD…RTGIDTLKII (253 aa). 17–18 provides a ligand contact to substrate; that stretch reads RD. D18 contacts Mn(2+). H21 acts as the Proton acceptor in catalysis. Substrate-binding residues include S171 and H200. Positions 200 and 202 each coordinate Mn(2+). Y291 contributes to the substrate binding site.

This sequence belongs to the 4-hydroxy-2-oxovalerate aldolase family.

It carries out the reaction (S)-4-hydroxy-2-oxopentanoate = acetaldehyde + pyruvate. This is 4-hydroxy-2-oxovalerate aldolase 5 from Rhodococcus opacus (strain B4).